The following is an 848-amino-acid chain: Translation initiation factor IF-2 (848 aa).

Residues 1–265 (MSDTDGKKPL…GNQRAEKQVR (265 aa)) are disordered. A compositionally biased stretch (basic and acidic residues) spans 89–162 (KAREVEEAAQ…AEIAKPKTEA (74 aa)). The span at 163-179 (RPATPADRAAAEAAAVR) shows a compositional bias: low complexity. A compositionally biased stretch (basic and acidic residues) spans 191 to 219 (RKTDRDRDTRGGGGDDRDSRNKGRDDSRR). The tr-type G domain occupies 346 to 514 (PRAPIITIMG…AIALQAEILE (169 aa)). The tract at residues 355–362 (GHVDHGKT) is G1. 355–362 (GHVDHGKT) contacts GTP. Residues 380-384 (GITQH) are G2. The tract at residues 402-405 (DTPG) is G3. GTP is bound by residues 402–406 (DTPGH) and 456–459 (NKID). The tract at residues 456–459 (NKID) is G4. The segment at 492 to 494 (SAK) is G5.

The protein belongs to the TRAFAC class translation factor GTPase superfamily. Classic translation factor GTPase family. IF-2 subfamily.

It is found in the cytoplasm. In terms of biological role, one of the essential components for the initiation of protein synthesis. Protects formylmethionyl-tRNA from spontaneous hydrolysis and promotes its binding to the 30S ribosomal subunits. Also involved in the hydrolysis of GTP during the formation of the 70S ribosomal complex. This Paracoccus denitrificans (strain Pd 1222) protein is Translation initiation factor IF-2.